The sequence spans 265 residues: Mlc titration factor A (265 aa).

His-111, His-148, His-152, and Glu-211 together coordinate Zn(2+).

This sequence belongs to the MtfA family. Interacts with Mlc. It depends on Zn(2+) as a cofactor.

The protein localises to the cytoplasm. Involved in the modulation of the activity of the glucose-phosphotransferase system (glucose-PTS). Interacts with the transcriptional repressor Mlc, preventing its interaction with DNA and leading to the modulation of expression of genes regulated by Mlc, including ptsG, which encodes the PTS system glucose-specific EIICB component. In terms of biological role, shows zinc-dependent metallopeptidase activity. This chain is Mlc titration factor A, found in Escherichia coli (strain ATCC 8739 / DSM 1576 / NBRC 3972 / NCIMB 8545 / WDCM 00012 / Crooks).